A 446-amino-acid polypeptide reads, in one-letter code: MKIVVIGTNHAGIATANTLLEQYPGHEIVMIDRNSNMSYLGCGTAIWVGRQIEKPDELFYAKAEDFEAKGVKILTETEVSEIDFANKKVYAKTKSDDEIIEAYDKLVLATGSRPIIPNLPGKDLKGIHFLKLFQEGQAIDAEFAKEKVKRIAVIGAGYIGTEIAEAAKRRGKEVLLFDAENTSLASYYDEEFAKGMDENLAQHGIELHFGELAKEFKANEEGYVSQIVTNKATYDVDLVINCIGFTANSALASDKLATFKNGAIKVDKHQQSSDPDVYAVGDVATIYSNALQDFTYIALASNAVRSGIVAGHNIGGKELESVGVQGSNGISIFGYNMTSTGLSVKAAKKLGLEVSFSDFEDKQKAWFLHENNDSVKIRIVYETKSRRIIGAQLASKSEIIAGNINMFSLAIQEKKTIDELALLDLFFLPHFNSPYNYMTVAALNAK.

FAD-binding positions include 7–11, Asp32, Cys42, Val79, 109–112, Lys131, and Tyr158; these read GTNHA and ATGS. The active-site Proton acceptor is the His10. Residue Cys42 is the Redox-active of the active site. Cys42 is modified (cysteine sulfinic acid (-SO2H)). Residues Ile159, Asp178, Tyr187, and Gly244 each coordinate NAD(+). Asp282 is a binding site for FAD. Ala298 contributes to the NAD(+) binding site. FAD is bound by residues Leu299, Ala300, and Ser301. Gly329 contacts NAD(+). An FAD-binding site is contributed by Phe427.

The protein belongs to the class-III pyridine nucleotide-disulfide oxidoreductase family. In terms of assembly, homodimer. It depends on FAD as a cofactor.

The catalysed reaction is 2 NADH + O2 + 2 H(+) = 2 NAD(+) + 2 H2O. With respect to regulation, inhibited by hydrogen peroxide, sulfhydryl reagents and quinine, but not by EDTA. Catalyzes the four-electron reduction of molecular oxygen to water. Active on beta-NADH, but not on alpha-NADH, beta-NADPH or alpha-NADPH. Under aerobic conditions, oxygen acts as the electron acceptor. Under anaerobic conditions, DCIP and MB can replace oxygen as the electron acceptor. In Lactococcus lactis subsp. cremoris (strain MG1363), this protein is NADH oxidase.